The primary structure comprises 654 residues: MPKERIVAPSKEFAKLANVSLKEYKSKYKESIEKPEKFWAEQAKRLTWFKKWTKVLRHDFAKAKVEWFVGGKLNVSYNCLDRHLDSPLKNKAALIWEGDNPDESKVLTYHDLHREVNHFANVLKKFKVKKGDRVLIYLPMVPELAIATLACTRIGAVHSVVFGGFSPEALLGRIEDCKPTLVITADGGYRGGKPIELKKNVDAALAETKFKVNDVIVVKRTGDEGNLNWKEGRDHWYHYLMKDPEVKKECPAVPMESEDPLFILYTSGSTGKPKGVLHTTAGYLLGANLTFATIFDYKDTDTYWCTADIGWITGHSYILYGPLSNGATSLMFEGVPSYPDMGRFWDVIDKYKVTVFYTAPTAIRALMREGLEHIKKRSLASLRLLGSVGEPINPEAWEWYYANIGKSKCPIVDTWWQTETGSIMISGIPGAIPQKPGSASWPFYGIQPVLVDNEGVELKGKGEISGNLCIAKPWPSMMRGVYGDPKRFFDTYFSQFKGYYFTGDGANRDKEGYFRITGRVDDVLNVSGHRIGSAEVESALVEHKSVAEAAVVGFPHDIKGQGIYAYVTVKQGVVTNDLLKKELIAMVEKVIGKIARPDVIHWAPGLPKTRSGKIMRRILRKIANNEFDTLGDISTLADPSVVQSLIDDKKKYHS.

CoA is bound by residues 190 to 193 and Thr313; that span reads RGGK. Residues 389–391, 413–418, Asp504, and Arg519 contribute to the ATP site; these read GEP and DTWWQT. Ser527 is a binding site for CoA. Arg530 provides a ligand contact to ATP. Val541, His543, and Val546 together coordinate Mg(2+). Lys613 carries the post-translational modification N6-acetyllysine.

It belongs to the ATP-dependent AMP-binding enzyme family. It depends on Mg(2+) as a cofactor. Post-translationally, acetylated. Deacetylation by the SIR2-homolog deacetylase activates the enzyme.

The catalysed reaction is acetate + ATP + CoA = acetyl-CoA + AMP + diphosphate. Catalyzes the conversion of acetate into acetyl-CoA (AcCoA), an essential intermediate at the junction of anabolic and catabolic pathways. AcsA undergoes a two-step reaction. In the first half reaction, AcsA combines acetate with ATP to form acetyl-adenylate (AcAMP) intermediate. In the second half reaction, it can then transfer the acetyl group from AcAMP to the sulfhydryl group of CoA, forming the product AcCoA. This Leptospira biflexa serovar Patoc (strain Patoc 1 / Ames) protein is Acetyl-coenzyme A synthetase.